A 360-amino-acid polypeptide reads, in one-letter code: DNA replication and repair protein RecF (360 aa).

30–37 (GHNGSGKT) contacts ATP.

Belongs to the RecF family.

It is found in the cytoplasm. Functionally, the RecF protein is involved in DNA metabolism; it is required for DNA replication and normal SOS inducibility. RecF binds preferentially to single-stranded, linear DNA. It also seems to bind ATP. The sequence is that of DNA replication and repair protein RecF from Shewanella sediminis (strain HAW-EB3).